The chain runs to 257 residues: Acetylglutamate kinase (257 aa).

Substrate contacts are provided by residues 43–44, Arg65, and Asn157; that span reads GG. Residues 180-185 and 208-210 contribute to the ATP site; these read DVSGIL and IIT.

Belongs to the acetylglutamate kinase family. ArgB subfamily. As to quaternary structure, homodimer.

The protein resides in the cytoplasm. It carries out the reaction N-acetyl-L-glutamate + ATP = N-acetyl-L-glutamyl 5-phosphate + ADP. Its pathway is amino-acid biosynthesis; L-arginine biosynthesis; N(2)-acetyl-L-ornithine from L-glutamate: step 2/4. In terms of biological role, catalyzes the ATP-dependent phosphorylation of N-acetyl-L-glutamate. This is Acetylglutamate kinase from Salmonella paratyphi B (strain ATCC BAA-1250 / SPB7).